A 331-amino-acid polypeptide reads, in one-letter code: UPF0284 protein PF0303 (331 aa).

It belongs to the UPF0284 family.

The polypeptide is UPF0284 protein PF0303 (Pyrococcus furiosus (strain ATCC 43587 / DSM 3638 / JCM 8422 / Vc1)).